The chain runs to 67 residues: ATP synthase F(0) complex subunit 8 (67 aa).

The chain crosses the membrane as a helical span at residues 8–24 (TWFTTVLASSITLFILM). Lysine 54 carries the N6-acetyllysine; alternate modification. Lysine 54 carries the N6-succinyllysine; alternate modification. Lysine 57 is modified (N6-acetyllysine).

The protein belongs to the ATPase protein 8 family. Component of the ATP synthase complex composed at least of ATP5F1A/subunit alpha, ATP5F1B/subunit beta, ATP5MC1/subunit c (homooctomer), MT-ATP6/subunit a, MT-ATP8/subunit 8, ATP5ME/subunit e, ATP5MF/subunit f, ATP5MG/subunit g, ATP5MK/subunit k, ATP5MJ/subunit j, ATP5F1C/subunit gamma, ATP5F1D/subunit delta, ATP5F1E/subunit epsilon, ATP5PF/subunit F6, ATP5PB/subunit b, ATP5PD/subunit d, ATP5PO/subunit OSCP. ATP synthase complex consists of a soluble F(1) head domain (subunits alpha(3) and beta(3)) - the catalytic core - and a membrane F(0) domain - the membrane proton channel (subunits c, a, 8, e, f, g, k and j). These two domains are linked by a central stalk (subunits gamma, delta, and epsilon) rotating inside the F1 region and a stationary peripheral stalk (subunits F6, b, d, and OSCP). Interacts with PRICKLE3.

Its subcellular location is the mitochondrion membrane. Functionally, subunit 8, of the mitochondrial membrane ATP synthase complex (F(1)F(0) ATP synthase or Complex V) that produces ATP from ADP in the presence of a proton gradient across the membrane which is generated by electron transport complexes of the respiratory chain. ATP synthase complex consist of a soluble F(1) head domain - the catalytic core - and a membrane F(1) domain - the membrane proton channel. These two domains are linked by a central stalk rotating inside the F(1) region and a stationary peripheral stalk. During catalysis, ATP synthesis in the catalytic domain of F(1) is coupled via a rotary mechanism of the central stalk subunits to proton translocation. In vivo, can only synthesize ATP although its ATP hydrolase activity can be activated artificially in vitro. Part of the complex F(0) domain. This chain is ATP synthase F(0) complex subunit 8, found in Cricetulus griseus (Chinese hamster).